A 763-amino-acid polypeptide reads, in one-letter code: Leucine-rich repeat and WD repeat-containing protein 1 (763 aa).

4 LRR repeats span residues 22–43 (QIKT…VPLL), 48–69 (RLEK…LRLP), 70–91 (CLKI…EALT), and 92–113 (NLEE…HKVI). Residues 206–372 (LTSSEEEERV…KTTKAKLQVP (167 aa)) form a disordered region. Residue Ser-270 is modified to Phosphoserine. Over residues 277–288 (VLNTPQKTQPVV) the composition is skewed to polar residues. The residue at position 280 (Thr-280) is a Phosphothreonine. Ser-290 bears the Phosphoserine mark. Positions 313–325 (LENVTQKAASQTE) are enriched in polar residues. 4 WD repeats span residues 499-539 (VSRR…QDYN), 608-647 (NNYR…ASWN), 653-704 (VPAV…MENF), and 729-763 (LEGP…RESH).

Belongs to the LRWD1 family. In terms of assembly, component of the ORC complex.

It localises to the nucleus. Its subcellular location is the chromosome. It is found in the centromere. The protein resides in the telomere. The protein localises to the cytoplasm. It localises to the cytoskeleton. Its subcellular location is the microtubule organizing center. It is found in the centrosome. The protein resides in the kinetochore. Required for G1/S transition. Recruits and stabilizes the origin recognition complex (ORC) onto chromatin during G1 to establish pre-replication complex (preRC) and to heterochromatic sites in post-replicated cells. Binds a combination of DNA and histone methylation repressive marks on heterochromatin. Required for silencing of major satellite repeats. May be important ORC2, ORC3 and ORC4 stability. The sequence is that of Leucine-rich repeat and WD repeat-containing protein 1 (lrwd1) from Danio rerio (Zebrafish).